Consider the following 329-residue polypeptide: Glycerol-3-phosphate dehydrogenase [NAD(P)+] (329 aa).

NADPH is bound by residues Trp11 and Lys101. Lys101, Gly132, and Ser134 together coordinate sn-glycerol 3-phosphate. Ala136 is an NADPH binding site. Sn-glycerol 3-phosphate contacts are provided by Lys188, Asp241, Ser251, Arg252, and Asn253. Lys188 (proton acceptor) is an active-site residue. NADPH is bound at residue Arg252. Residue Glu278 participates in NADPH binding.

Belongs to the NAD-dependent glycerol-3-phosphate dehydrogenase family.

The protein localises to the cytoplasm. It carries out the reaction sn-glycerol 3-phosphate + NAD(+) = dihydroxyacetone phosphate + NADH + H(+). It catalyses the reaction sn-glycerol 3-phosphate + NADP(+) = dihydroxyacetone phosphate + NADPH + H(+). The protein operates within membrane lipid metabolism; glycerophospholipid metabolism. In terms of biological role, catalyzes the reduction of the glycolytic intermediate dihydroxyacetone phosphate (DHAP) to sn-glycerol 3-phosphate (G3P), the key precursor for phospholipid synthesis. This is Glycerol-3-phosphate dehydrogenase [NAD(P)+] from Onion yellows phytoplasma (strain OY-M).